We begin with the raw amino-acid sequence, 235 residues long: Sugar fermentation stimulation protein homolog (235 aa).

This sequence belongs to the SfsA family.

This is Sugar fermentation stimulation protein homolog from Pseudomonas aeruginosa (strain LESB58).